Consider the following 303-residue polypeptide: Bidirectional sugar transporter SWEET14 (303 aa).

The Extracellular segment spans residues Met-1 to Pro-9. The chain crosses the membrane as a helical span at residues Trp-10–Leu-30. A MtN3/slv 1 domain is found at Ala-13–Lys-98. Residues Pro-31–Gly-44 lie on the Cytoplasmic side of the membrane. Residues Phe-45 to Leu-65 form a helical membrane-spanning segment. Topologically, residues Leu-66–Leu-72 are extracellular. The chain crosses the membrane as a helical span at residues Leu-73–Val-93. At Tyr-94–Lys-105 the chain is on the cytoplasmic side. A helical membrane pass occupies residues Leu-106–Ser-126. Topologically, residues Ala-127–Val-133 are extracellular. A helical membrane pass occupies residues Val-134 to Ile-154. Residues Val-134–Ser-217 enclose the MtN3/slv 2 domain. The Cytoplasmic segment spans residues Arg-155–Pro-167. A helical transmembrane segment spans residues Phe-168–Ile-188. At Lys-189–Tyr-192 the chain is on the extracellular side. Residues Val-193–Met-213 traverse the membrane as a helical segment. The Cytoplasmic segment spans residues Tyr-214–Ala-303. The segment at His-266–Ala-290 is disordered.

Belongs to the SWEET sugar transporter family. Forms homooligomers and/or heterooligomers.

The protein localises to the cell membrane. In terms of biological role, mediates both low-affinity uptake and efflux of sugar across the plasma membrane. The sequence is that of Bidirectional sugar transporter SWEET14 (SWEET14) from Oryza sativa subsp. indica (Rice).